Here is a 182-residue protein sequence, read N- to C-terminus: Adenine phosphoribosyltransferase (182 aa).

The protein belongs to the purine/pyrimidine phosphoribosyltransferase family. Homodimer.

It is found in the cytoplasm. The catalysed reaction is AMP + diphosphate = 5-phospho-alpha-D-ribose 1-diphosphate + adenine. It participates in purine metabolism; AMP biosynthesis via salvage pathway; AMP from adenine: step 1/1. Its function is as follows. Catalyzes a salvage reaction resulting in the formation of AMP, that is energically less costly than de novo synthesis. The sequence is that of Adenine phosphoribosyltransferase from Pseudomonas aeruginosa (strain LESB58).